Reading from the N-terminus, the 100-residue chain is Small ribosomal subunit protein uS14c (100 aa).

The protein belongs to the universal ribosomal protein uS14 family. Part of the 30S ribosomal subunit.

It localises to the plastid. It is found in the chloroplast. Binds 16S rRNA, required for the assembly of 30S particles. This Morus indica (Mulberry) protein is Small ribosomal subunit protein uS14c.